Reading from the N-terminus, the 418-residue chain is Gamma-glutamyl phosphate reductase (418 aa).

This sequence belongs to the gamma-glutamyl phosphate reductase family.

The protein resides in the cytoplasm. The enzyme catalyses L-glutamate 5-semialdehyde + phosphate + NADP(+) = L-glutamyl 5-phosphate + NADPH + H(+). It functions in the pathway amino-acid biosynthesis; L-proline biosynthesis; L-glutamate 5-semialdehyde from L-glutamate: step 2/2. Catalyzes the NADPH-dependent reduction of L-glutamate 5-phosphate into L-glutamate 5-semialdehyde and phosphate. The product spontaneously undergoes cyclization to form 1-pyrroline-5-carboxylate. The chain is Gamma-glutamyl phosphate reductase from Pelodictyon phaeoclathratiforme (strain DSM 5477 / BU-1).